A 195-amino-acid polypeptide reads, in one-letter code: Imidazoleglycerol-phosphate dehydratase (195 aa).

It belongs to the imidazoleglycerol-phosphate dehydratase family.

It localises to the cytoplasm. The catalysed reaction is D-erythro-1-(imidazol-4-yl)glycerol 3-phosphate = 3-(imidazol-4-yl)-2-oxopropyl phosphate + H2O. It participates in amino-acid biosynthesis; L-histidine biosynthesis; L-histidine from 5-phospho-alpha-D-ribose 1-diphosphate: step 6/9. The chain is Imidazoleglycerol-phosphate dehydratase from Maridesulfovibrio salexigens (strain ATCC 14822 / DSM 2638 / NCIMB 8403 / VKM B-1763) (Desulfovibrio salexigens).